The primary structure comprises 297 residues: Putative phosphate permease MJ0630 (297 aa).

9 consecutive transmembrane segments (helical) span residues isoleucine 2 to leucine 22, leucine 45 to serine 65, valine 67 to leucine 87, threonine 99 to glycine 119, isoleucine 121 to serine 141, isoleucine 154 to serine 174, valine 180 to leucine 200, phenylalanine 225 to valine 245, and asparagine 274 to asparagine 294.

Belongs to the inorganic phosphate transporter (PiT) (TC 2.A.20) family.

Its subcellular location is the cell membrane. Its function is as follows. Potential transporter for phosphate. In Methanocaldococcus jannaschii (strain ATCC 43067 / DSM 2661 / JAL-1 / JCM 10045 / NBRC 100440) (Methanococcus jannaschii), this protein is Putative phosphate permease MJ0630.